A 312-amino-acid polypeptide reads, in one-letter code: Pantothenate kinase (312 aa).

Residue 97-104 (GSVAVGKS) coordinates ATP.

The protein belongs to the prokaryotic pantothenate kinase family.

The protein resides in the cytoplasm. The catalysed reaction is (R)-pantothenate + ATP = (R)-4'-phosphopantothenate + ADP + H(+). It participates in cofactor biosynthesis; coenzyme A biosynthesis; CoA from (R)-pantothenate: step 1/5. The protein is Pantothenate kinase of Mycolicibacterium paratuberculosis (strain ATCC BAA-968 / K-10) (Mycobacterium paratuberculosis).